A 580-amino-acid chain; its full sequence is MSSSIVVIAAGERSTEAVLAAEALRRAATAAGRSVTIEIRSDQGVLGALPTELTNGAAHVLIVGDADADTARFGDAQLLHLSLGAVLDDPAAAVSQLAATTAPASTSATTDASGAGGKRIVAITSCPTGIAHTFMAAEGLQQAAKKLGYQMRVETQGSVGAQDALTDEEIRAADVVIIAADREVDLARFGGKRLFKSGTKPAINDGPALIQKALAEAGVHGGAAPVAGANATSDAKGNARTGAYKHLMTGVSFMLPFVTAGGLLIALAFALGGIYAGDDAHQGTLAWSLFQIGAKAGFTLMVPALAGYIAYSIADRPGIAPGMIGGLVAANLNAGFLGGIIAGFIAGYGVAALNRYIKLPRNLEGLKPVLILPVLGTLLVGLAMMYVFGQPVADLLAWLTAWLRGMQGSSALLLGLLLGGMMAFDMGGPVNKAAYAFSTGLIASQVYTPMAAAMVAGMTPPLGIALATWVFRNRFTVEERGSATAAGVLGLAFVTEGAIPYAARDPLRTIPALVIGSAVAGAISMTAGAELKAPHGGIFVLLIPNAVTHLLNYVLALVVGVVVTAVALRLLKKPVADVIA.

2 consecutive PTS EIIB type-2 domains span residues 1–99 and 120–215; these read MSSS…QLAA and IVAI…KALA. Cys-126 functions as the Phosphocysteine intermediate; for EIIB activity in the catalytic mechanism. Cys-126 bears the Phosphocysteine; by EIIA mark. A PTS EIIC type-2 domain is found at 243–580; that stretch reads AYKHLMTGVS…LKKPVADVIA (338 aa). The next 9 membrane-spanning stretches (helical) occupy residues 254-274, 289-309, 332-352, 369-389, 410-430, 451-471, 483-503, 509-529, and 549-571; these read MLPFVTAGGLLIALAFALGGI, LFQIGAKAGFTLMVPALAGYI, LNAGFLGGIIAGFIAGYGVAA, VLILPVLGTLLVGLAMMYVFG, SALLLGLLLGGMMAFDMGGPV, AAAMVAGMTPPLGIALATWVF, ATAAGVLGLAFVTEGAIPYAA, TIPALVIGSAVAGAISMTAGA, and HLLNYVLALVVGVVVTAVALRLL.

It is found in the cell inner membrane. It carries out the reaction D-fructose(out) + N(pros)-phospho-L-histidyl-[protein] = D-fructose 1-phosphate(in) + L-histidyl-[protein]. In terms of biological role, the phosphoenolpyruvate-dependent sugar phosphotransferase system (sugar PTS), a major carbohydrate active transport system, catalyzes the phosphorylation of incoming sugar substrates concomitantly with their translocation across the cell membrane. The enzyme II FruAB PTS system is involved in fructose transport. This is PTS system fructose-specific EIIB'BC component from Xanthomonas campestris pv. campestris (strain ATCC 33913 / DSM 3586 / NCPPB 528 / LMG 568 / P 25).